We begin with the raw amino-acid sequence, 359 residues long: MNKQLLSCSLKSGKQVTMVVASVATDGVDQQVEISYYDQKVIGNGSFGVVFLAKLSTTNEMVAIKKVLQDKRFKNRELQIMRKLNHPNIVKLKYFFYSSGDKKDELYLNLILEYVPETVYRVARHYSKQRQSIPMIYVKLYMYQLLRSLAYIHSIGICHRDIKPQNLLIDPETGILKLCDFGSAKYLVRNEPNVSYICSRYYRAPELIFGATNYTNSIDVWSAGTVIAELLLGQPIFPGDSGVDQLVEIIKVLGTPTREQIQSMNPNYKEFKFPQIKAHPWNKVFRVHTPAEAIDLISKIIEYTPTSRPTPQAACQHAFFDELRSPDARLPSGRALPQLEMDGPNEVSATGGDMAGPSA.

A Protein kinase domain is found at 36–320 (YYDQKVIGNG…PQAACQHAFF (285 aa)). ATP contacts are provided by residues 42–50 (IGNGSFGVV) and lysine 65. Aspartate 161 serves as the catalytic Proton acceptor. The segment at 330–359 (LPSGRALPQLEMDGPNEVSATGGDMAGPSA) is disordered.

It belongs to the protein kinase superfamily. CMGC Ser/Thr protein kinase family. GSK-3 subfamily. Monomer. Interacts with axl-1.

It carries out the reaction L-seryl-[tau protein] + ATP = O-phospho-L-seryl-[tau protein] + ADP + H(+). The enzyme catalyses L-threonyl-[tau protein] + ATP = O-phospho-L-threonyl-[tau protein] + ADP + H(+). Phosphorylates oma-1, a regulator of the oocyte-to-embryo transition, enabling its degradation. Phosphorylates skn-1, preventing it from accumulating in nuclei and thus inhibiting phase II gene expression in the oxidative stress defense. Involved in mesendoderm specification and mitotic spindle orientation in EMS blastomeres. Thought to be a branch point in these processes as proteins downstream are not required. Negatively regulates Wnt signaling in vulval precursor cells and acts as a Wnt-independent repressor of med-1 and med-2 in the C lineage inhibiting mesoderm development. Required for normal lifespan and LiCl-induced lifespan extension. In Caenorhabditis briggsae, this protein is Glycogen synthase kinase-3 (gsk-3).